The primary structure comprises 207 residues: Protein ERP4 (207 aa).

A signal peptide spans 1–21 (MRVFTLIAILFSSSLLTHAFS). At 22 to 174 (SNYAPVGISL…TVSSTESRLT (153 aa)) the chain is on the lumenal side. One can recognise a GOLD domain in the interval 36–118 (KECLYYDLSS…PKKVEITLEK (83 aa)). A helical membrane pass occupies residues 175-195 (WLSLLIMGVMVGISIVQALII). The Cytoplasmic portion of the chain corresponds to 196–207 (QFFFTSRQKNYV).

The protein belongs to the EMP24/GP25L family.

Its subcellular location is the endoplasmic reticulum membrane. Functionally, involved in vesicular protein trafficking. The polypeptide is Protein ERP4 (ERP4) (Saccharomyces cerevisiae (strain ATCC 204508 / S288c) (Baker's yeast)).